A 262-amino-acid polypeptide reads, in one-letter code: ATP synthase subunit a (262 aa).

The next 5 membrane-spanning stretches (helical) occupy residues 24–44 (AVHLDTLFFSLVAGVLFLVVF), 85–105 (IAPLALTIFCWVFIMNAIDLV), 129–149 (DISATLGMSICVFGLILFYTV), 194–214 (LFGNMYAGELIFILIAVMYMA), and 228–248 (LVWAIFHILVITLQAFIFMML).

This sequence belongs to the ATPase A chain family. As to quaternary structure, F-type ATPases have 2 components, CF(1) - the catalytic core - and CF(0) - the membrane proton channel. CF(1) has five subunits: alpha(3), beta(3), gamma(1), delta(1), epsilon(1). CF(0) has three main subunits: a(1), b(2) and c(9-12). The alpha and beta chains form an alternating ring which encloses part of the gamma chain. CF(1) is attached to CF(0) by a central stalk formed by the gamma and epsilon chains, while a peripheral stalk is formed by the delta and b chains.

It localises to the cell inner membrane. Key component of the proton channel; it plays a direct role in the translocation of protons across the membrane. The polypeptide is ATP synthase subunit a (Haemophilus ducreyi (strain 35000HP / ATCC 700724)).